Consider the following 333-residue polypeptide: Acetoin:2,6-dichlorophenolindophenol oxidoreductase subunit alpha (333 aa).

As to quaternary structure, tetramer of 2 alpha and 2 beta subunits. Requires thiamine diphosphate as cofactor.

Its pathway is ketone degradation; acetoin degradation. In terms of biological role, catalyzes the 2,6-dichlorophenolindophenol-dependent cleavage of acetoin into acetate and acetaldehyde. The alpha subunit is probably the catalytic subunit of the enzyme. The sequence is that of Acetoin:2,6-dichlorophenolindophenol oxidoreductase subunit alpha (acoA) from Bacillus subtilis (strain 168).